A 791-amino-acid chain; its full sequence is Leucine-rich repeat-containing protein SOG2 (791 aa).

Residues 1–28 (MVATSSKRTLDPKEEHLPADKTSTNSSN) form a disordered region. The span at 8–19 (RTLDPKEEHLPA) shows a compositional bias: basic and acidic residues. LRR repeat units follow at residues 43–64 (SGTT…DVGY), 67–88 (NVER…FKRL), 90–111 (RLQY…LTQC), 113–134 (QLEI…ISSF), 138–159 (NIRV…KSIT), and 163–183 (KLSI…DQVQ). Phosphothreonine is present on T214. 2 disordered regions span residues 454–506 (ASKA…TPSA) and 534–569 (HTHG…PRQQ). A compositionally biased stretch (low complexity) spans 469–486 (SSSSITSGGGPAASTTST). Polar residues predominate over residues 544 to 569 (NAISNGSSQTNMNEVKTTSDTIPRQQ).

The protein localises to the cytoplasm. Functionally, required for proper cell morphogenesis and cell separation after mitosis. Functions in the RAM (regulation of ACE2 activity and cellular morphogenesis) signaling network and is required for proper ACE2 localization and CBK1 kinase activity. The chain is Leucine-rich repeat-containing protein SOG2 from Saccharomyces cerevisiae (strain ATCC 204508 / S288c) (Baker's yeast).